A 423-amino-acid polypeptide reads, in one-letter code: MSYVIDRRLNGKNKSTVNRQRFLRRYREHIKKAVEEAVSRRSIMDMEHGEQISIPGRDIDEPVLHHGRGGKQTIVHPGNKEFTAGEHIPRPQGGGGGGGRGKAGNSGEGMDEFVFQITQEEFLEFMFEDLELPNLVKRHLTGADTFKTVRAGIANEGNPSRINIVRTLRSAHARRIALTGSSRALLREAQKELDRLRVEEPDNFTDIQEVEQEIERLKARINRLPFLDTFDLKYNLLVKQPNPSSKAVMFCLMDVSGSMTQATKDIAKRFFILLYLFLKRNYERIEVVFIRHHTSAREVDEEEFFYSRETGGTIVSSALKLMQEIMAERYPASDWNIYAAQASDGDNWNDDSPICRDILSKQIMPHVQYYTYVEITPREHQALWYEYERIGDAFPDTFAQQQLVSAGDIYPVFRELFQRRLAT.

Residues 81–108 (EFTAGEHIPRPQGGGGGGGRGKAGNSGE) form a disordered region. A compositionally biased stretch (gly residues) spans 92 to 107 (QGGGGGGGRGKAGNSG).

This sequence belongs to the UPF0229 family.

The protein is UPF0229 protein Pput_0430 of Pseudomonas putida (strain ATCC 700007 / DSM 6899 / JCM 31910 / BCRC 17059 / LMG 24140 / F1).